A 262-amino-acid polypeptide reads, in one-letter code: Thiazole synthase (262 aa).

The active-site Schiff-base intermediate with DXP is Lys95. Residues Gly156, 182–183 (AG), and 204–205 (NT) contribute to the 1-deoxy-D-xylulose 5-phosphate site.

It belongs to the ThiG family. In terms of assembly, homotetramer. Forms heterodimers with either ThiH or ThiS.

The protein resides in the cytoplasm. The catalysed reaction is [ThiS sulfur-carrier protein]-C-terminal-Gly-aminoethanethioate + 2-iminoacetate + 1-deoxy-D-xylulose 5-phosphate = [ThiS sulfur-carrier protein]-C-terminal Gly-Gly + 2-[(2R,5Z)-2-carboxy-4-methylthiazol-5(2H)-ylidene]ethyl phosphate + 2 H2O + H(+). It participates in cofactor biosynthesis; thiamine diphosphate biosynthesis. Catalyzes the rearrangement of 1-deoxy-D-xylulose 5-phosphate (DXP) to produce the thiazole phosphate moiety of thiamine. Sulfur is provided by the thiocarboxylate moiety of the carrier protein ThiS. In vitro, sulfur can be provided by H(2)S. The polypeptide is Thiazole synthase (Yersinia enterocolitica serotype O:8 / biotype 1B (strain NCTC 13174 / 8081)).